The primary structure comprises 1512 residues: ATP-dependent permease YOR1 (1512 aa).

Residues 1–68 form a disordered region; that stretch reads MSPLLPTHWG…KGMKETEDGG (68 aa). Over residues 13–29 the composition is skewed to polar residues; that stretch reads APQNEPTLPSPSHSVST. Residues 31-65 show a composition bias toward basic and acidic residues; it reads VGDEEKLRRSEGSDGEDRINLDSNKYDVKGMKETE. A run of 5 helical transmembrane segments spans residues 229 to 249, 288 to 308, 363 to 385, 475 to 495, and 507 to 527; these read ASLAMSLLDVFGWFFMSAGFI, GPGIGAAIGLLLLLICSSLGM, FAAGFSHMLWTAPVQMIVIIIIL, GMTAIAMSLPILAAILSFITY, and IFTVITLFNLMRMPLMMWPMT. The ABC transmembrane type-1 1 domain maps to 246–533; the sequence is AGFIKVFGDT…WPMTLSSTAD (288 aa). A disordered region spans residues 594–656; that stretch reads VLNGGKPGGP…SAPGIDEEIS (63 aa). Residues 619–643 show a composition bias toward low complexity; sequence AEEIQAETAAGQPGAGEASAEGQGQ. The ABC transporter 1 domain maps to 651–871; it reads IDEEISEKKE…NGAFAKLIKE (221 aa). 683–690 contacts ATP; it reads GAIGSGKS. The next 4 helical transmembrane spans lie at 937 to 957, 974 to 994, 1067 to 1087, and 1167 to 1187; these read GVFMLPLLFFCIVVAQSFYVI, NGFYMGIYAGLGVGLAIALFF, VILLAIIEPYFLIAMAVVSLL, and FLGSLLSFSVAIIVVCSSSVS. The ABC transmembrane type-1 2 domain occupies 943–1217; the sequence is LLFFCIVVAQ…LVRQIAEVEN (275 aa). The 242-residue stretch at 1255-1496 folds into the ABC transporter 2 domain; the sequence is IEFKDVRMRY…GGIFTEMCSK (242 aa). 1289–1296 is an ATP binding site; it reads GRTGAGKS.

Belongs to the ABC transporter superfamily. ABCC family. Conjugate transporter (TC 3.A.1.208) subfamily.

It localises to the extracellular vesicle membrane. Its subcellular location is the secreted. Its function is as follows. Transmembrane transporter. May play a role in the packaging or formation of extracellular vesicles (EVs), and in the export of virulence factors from EVs. Required for efficient non-lytic exocytosis from host macrophages, the process by which the yeast escapes host macrophages with both host cell and pathogen remaining viable. This Cryptococcus neoformans var. grubii serotype A (strain H99 / ATCC 208821 / CBS 10515 / FGSC 9487) (Filobasidiella neoformans var. grubii) protein is ATP-dependent permease YOR1.